We begin with the raw amino-acid sequence, 532 residues long: 2,3-bisphosphoglycerate-independent phosphoglycerate mutase (532 aa).

Residues Asp15 and Ser65 each contribute to the Mn(2+) site. Residue Ser65 is the Phosphoserine intermediate of the active site. Residues His126, Arg156–Asp157, Arg188, Arg194, Arg258–Arg261, and Lys331 each bind substrate. Asp398, His402, Asp439, His440, and His457 together coordinate Mn(2+).

Belongs to the BPG-independent phosphoglycerate mutase family. As to quaternary structure, monomer. Mn(2+) serves as cofactor.

It catalyses the reaction (2R)-2-phosphoglycerate = (2R)-3-phosphoglycerate. Its pathway is carbohydrate degradation; glycolysis; pyruvate from D-glyceraldehyde 3-phosphate: step 3/5. Its function is as follows. Catalyzes the interconversion of 2-phosphoglycerate and 3-phosphoglycerate. The polypeptide is 2,3-bisphosphoglycerate-independent phosphoglycerate mutase (Trichodesmium erythraeum (strain IMS101)).